The sequence spans 120 residues: Putative pterin-4-alpha-carbinolamine dehydratase (120 aa).

This sequence belongs to the pterin-4-alpha-carbinolamine dehydratase family.

It catalyses the reaction (4aS,6R)-4a-hydroxy-L-erythro-5,6,7,8-tetrahydrobiopterin = (6R)-L-erythro-6,7-dihydrobiopterin + H2O. The protein is Putative pterin-4-alpha-carbinolamine dehydratase of Saccharomyces cerevisiae (strain ATCC 204508 / S288c) (Baker's yeast).